The chain runs to 443 residues: MIKNDTIAAIATPPGEGSIAIVRISGPEAIQITDKIFSGSVPSFASHTAHLGIVNHKDRQIDQVLLLIMRAPRSFTGEDVIELQCHGGYFSCSQILEALVSEGARPALPGEFSQRAFLNGKIDLIQAEAIQNIIAADNLDAFFIAQNHFQGHFSKKIQLISSLIVESLAFIEVLADFPEEEQPDMDVPKQRLNEAMLIIEDLISSFDEGQRLAQGTSIVLAGHPNVGKSSLLNALTNKNRAIVTDIPGTTRDILEENWTLQGKRIRLIDSAGQRETDNLVEQEGIERAISAMEQSEGILWVMDATQPPPSLPEILFQKPSLLLWNKSDLASPPQLDTSLPQLAISAKTGEGIFELKQFIQKWMQQQQLGKNAKVFLVSSRHHTILQQMRSYLLSAKEGLLAQLPPELIALELRQALQATGNLSGSEVNETILGEIFSRFCIGK.

Residues R23, E82, and K121 each contribute to the (6S)-5-formyl-5,6,7,8-tetrahydrofolate site. The TrmE-type G domain maps to 215–364; sequence GTSIVLAGHP…LKQFIQKWMQ (150 aa). Residue N225 participates in K(+) binding. GTP is bound by residues 225–230, 244–250, and 269–272; these read NVGKSS, TDIPGTT, and DSAG. Residue S229 coordinates Mg(2+). Residues T244, I246, and T249 each contribute to the K(+) site. Mg(2+) is bound at residue T250. K443 lines the (6S)-5-formyl-5,6,7,8-tetrahydrofolate pocket.

The protein belongs to the TRAFAC class TrmE-Era-EngA-EngB-Septin-like GTPase superfamily. TrmE GTPase family. Homodimer. Heterotetramer of two MnmE and two MnmG subunits. K(+) is required as a cofactor.

The protein localises to the cytoplasm. Its function is as follows. Exhibits a very high intrinsic GTPase hydrolysis rate. Involved in the addition of a carboxymethylaminomethyl (cmnm) group at the wobble position (U34) of certain tRNAs, forming tRNA-cmnm(5)s(2)U34. This Chlamydia caviae (strain ATCC VR-813 / DSM 19441 / 03DC25 / GPIC) (Chlamydophila caviae) protein is tRNA modification GTPase MnmE.